We begin with the raw amino-acid sequence, 237 residues long: ATP-dependent dethiobiotin synthetase BioD (237 aa).

21–26 (GVGKTV) is a binding site for ATP. Threonine 25 serves as a coordination point for Mg(2+). Lysine 48 is an active-site residue. Threonine 52 contributes to the substrate binding site. ATP is bound by residues aspartate 56, 117–120 (EALG), 177–178 (SC), and 209–211 (PYL). Mg(2+) contacts are provided by aspartate 56 and glutamate 117.

This sequence belongs to the dethiobiotin synthetase family. As to quaternary structure, homodimer. Mg(2+) is required as a cofactor.

Its subcellular location is the cytoplasm. The enzyme catalyses (7R,8S)-7,8-diammoniononanoate + CO2 + ATP = (4R,5S)-dethiobiotin + ADP + phosphate + 3 H(+). It catalyses the reaction (7R,8S)-8-amino-7-(carboxyamino)nonanoate + ATP = (4R,5S)-dethiobiotin + ADP + phosphate + H(+). The protein operates within cofactor biosynthesis; biotin biosynthesis; biotin from 7,8-diaminononanoate: step 1/2. In terms of biological role, catalyzes a mechanistically unusual reaction, the ATP-dependent insertion of CO2 between the N7 and N8 nitrogen atoms of 7,8-diaminopelargonic acid (DAPA, also called 7,8-diammoniononanoate) to form a ureido ring. This cyanobacterium does not encode bioA (which catalyzes the formation of the precursor for this reaction in the cannonical pathway), instead it encodes bioU, which replaces bioA and also performs the first half of the cannonical BioD reaction. Thus in this bacteria BioD has a different substrate. In Synechocystis replacement of bioU by bioA from E.coli leads to biotin synthesis, showing BioD can use the 'cannonical' 7,8-diammoniononanoate as a substrate. This Synechocystis sp. (strain ATCC 27184 / PCC 6803 / Kazusa) protein is ATP-dependent dethiobiotin synthetase BioD.